The sequence spans 806 residues: ATP-dependent zinc metalloprotease FTSH 11, chloroplastic/mitochondrial (806 aa).

The transit peptide at 1 to 63 directs the protein to the chloroplast and mitochondrion; the sequence is MSSSTLQASL…RFRPLPCSLR (63 aa). Basic and acidic residues predominate over residues 106-116; it reads FVGGEETKSGG. A disordered region spans residues 106–130; that stretch reads FVGGEETKSGGEEAEVSNGVTEGKE. Residues 301–321 form a helical membrane-spanning segment; it reads LVSTILFTVAVGLVWIMGAAA. 402–409 is a binding site for ATP; sequence GAPGTGKT. Position 620 (H620) interacts with Zn(2+). The active site involves E621. Residues H624 and D698 each coordinate Zn(2+).

The protein in the N-terminal section; belongs to the AAA ATPase family. It in the C-terminal section; belongs to the peptidase M41 family. As to quaternary structure, homooligomer. It depends on Zn(2+) as a cofactor.

It localises to the mitochondrion inner membrane. The protein localises to the plastid. It is found in the chloroplast thylakoid membrane. Its function is as follows. Probable ATP-dependent zinc metallopeptidase. Involved in the assembly and/or stability of the complexes I and V. Involved in thermotolerance but not in high light stress resistance or in the assembly/stability of the complexes I and V of the mitochondrial oxidative phosphorylation system. The polypeptide is ATP-dependent zinc metalloprotease FTSH 11, chloroplastic/mitochondrial (FTSH11) (Arabidopsis thaliana (Mouse-ear cress)).